We begin with the raw amino-acid sequence, 230 residues long: Probable thioesterase YBR096W (230 aa).

This sequence belongs to the lcsJ thioesterase family.

This Saccharomyces cerevisiae (strain ATCC 204508 / S288c) (Baker's yeast) protein is Probable thioesterase YBR096W.